A 247-amino-acid polypeptide reads, in one-letter code: tRNA (guanine-N(1)-)-methyltransferase (247 aa).

Position 126 (glycine 126) interacts with S-adenosyl-L-methionine.

The protein belongs to the RNA methyltransferase TrmD family. Homodimer.

The protein localises to the cytoplasm. The catalysed reaction is guanosine(37) in tRNA + S-adenosyl-L-methionine = N(1)-methylguanosine(37) in tRNA + S-adenosyl-L-homocysteine + H(+). Its function is as follows. Specifically methylates guanosine-37 in various tRNAs. The protein is tRNA (guanine-N(1)-)-methyltransferase of Jannaschia sp. (strain CCS1).